Here is a 153-residue protein sequence, read N- to C-terminus: Protein SREK1IP1 (153 aa).

The segment at 13-30 adopts a CCHC-type zinc-finger fold; the sequence is AGCRKCGYPGHLTFECRN. The disordered stretch occupies residues 44–153; it reads VSSTSSEDSD…SPNRSEVTKK (110 aa). Ser52 carries the phosphoserine modification. Residues 66-84 are compositionally biased toward basic and acidic residues; it reads QEKRINEEEEKKKEKSREK. Over residues 85–94 the composition is skewed to basic residues; it reads IKLKKKRKRS. Residues Ser96 and Ser97 each carry the phosphoserine modification. Positions 106-141 are enriched in basic residues; it reads QKKQKYQKKEKKKEKKNKSKKGKHHKKEKKKRKKEK.

In terms of assembly, interacts with SREK1/SFRS12.

In terms of biological role, possible splicing regulator involved in the control of cellular survival. This Rattus norvegicus (Rat) protein is Protein SREK1IP1 (Srek1ip1).